Reading from the N-terminus, the 185-residue chain is Alpha-S1-casein (185 aa).

Residues M1–A15 form the signal peptide. Residues S31, S33, S41, S71, S85, S86, S88, S89, S90, and S91 each carry the phosphoserine modification.

The protein belongs to the alpha-casein family. In terms of assembly, heteromultimers of alpha-s1 casein and kappa-casein; disulfide-linked. Post-translationally, not glycosylated. As to expression, mammary gland specific. Secreted in milk.

It is found in the secreted. Important role in the capacity of milk to transport calcium phosphate. Functionally, casoxin D acts as opioid antagonist and has vasorelaxing activity mediated by bradykinin B1 receptors. The chain is Alpha-S1-casein (CSN1S1) from Homo sapiens (Human).